The sequence spans 278 residues: Small ribosomal subunit protein uS5 (278 aa).

The tract at residues 1–43 is disordered; the sequence is MADAPAPAGGRGGFRGGFGGRGRGRGRGRGRGRGRGRGAKDGD. The span at 9–21 shows a compositional bias: gly residues; it reads GGRGGFRGGFGGR. Residues 22-37 are compositionally biased toward basic residues; it reads GRGRGRGRGRGRGRGR. The 64-residue stretch at 88-151 folds into the S5 DRBM domain; that stretch reads LKDEVLKIMP…ILAKLSVVPV (64 aa).

This sequence belongs to the universal ribosomal protein uS5 family.

Functionally, component of the ribosome, a large ribonucleoprotein complex responsible for the synthesis of proteins in the cell. The small ribosomal subunit (SSU) binds messenger RNAs (mRNAs) and translates the encoded message by selecting cognate aminoacyl-transfer RNA (tRNA) molecules. The large subunit (LSU) contains the ribosomal catalytic site termed the peptidyl transferase center (PTC), which catalyzes the formation of peptide bonds, thereby polymerizing the amino acids delivered by tRNAs into a polypeptide chain. The nascent polypeptides leave the ribosome through a tunnel in the LSU and interact with protein factors that function in enzymatic processing, targeting, and the membrane insertion of nascent chains at the exit of the ribosomal tunnel. Plays a role in the assembly and function of the 40S ribosomal subunit. Mutations in this protein affects the control of translational fidelity. Involved in nucleolar processing of pre-18S ribosomal RNA and ribosome assembly. The protein is Small ribosomal subunit protein uS5 (RPS2) of Urechis caupo (Innkeeper worm).